Reading from the N-terminus, the 228-residue chain is tRNA (carboxymethyluridine(34)-5-O)-methyltransferase (228 aa).

It is found in the cytoplasm. The protein localises to the nucleus. It carries out the reaction 5-(carboxymethyl)uridine(34) in tRNA + S-adenosyl-L-methionine = 5-(2-methoxy-2-oxoethyl)uridine(34) in tRNA + S-adenosyl-L-homocysteine. Functionally, required for the methylation of the wobble bases at position 34 in tRNA. Appears to have a role in stress-response. The sequence is that of tRNA (carboxymethyluridine(34)-5-O)-methyltransferase (trm9) from Schizosaccharomyces pombe (strain 972 / ATCC 24843) (Fission yeast).